Consider the following 250-residue polypeptide: Cobalt transport protein CbiM (250 aa).

The signal sequence occupies residues 1-26; it reads MNKKEKRIVAIAAAFALCFGISPAVN. Helical transmembrane passes span 38–58, 68–88, 102–122, 134–154, 165–185, and 209–229; these read KYCI…YFSI, SITM…LKIP, LGAI…VLIF, TLGA…FGIY, LSGI…VTSI, and FAPT…VIMI.

It belongs to the CbiM family. In terms of assembly, forms an energy-coupling factor (ECF) transporter complex composed of an ATP-binding protein (A component, CbiO), a transmembrane protein (T component, CbiQ) and 2 possible substrate-capture proteins (S components, CbiM and CbiN) of unknown stoichimetry.

It localises to the cell membrane. It participates in cofactor biosynthesis; adenosylcobalamin biosynthesis. Part of the energy-coupling factor (ECF) transporter complex CbiMNOQ involved in cobalt import. This is Cobalt transport protein CbiM from Lachnoclostridium phytofermentans (strain ATCC 700394 / DSM 18823 / ISDg) (Clostridium phytofermentans).